The chain runs to 294 residues: Probable 2-(5''-triphosphoribosyl)-3'-dephosphocoenzyme-A synthase (294 aa).

This sequence belongs to the CitG/MdcB family.

The catalysed reaction is 3'-dephospho-CoA + ATP = 2'-(5''-triphospho-alpha-D-ribosyl)-3'-dephospho-CoA + adenine. The sequence is that of Probable 2-(5''-triphosphoribosyl)-3'-dephosphocoenzyme-A synthase from Streptococcus pyogenes serotype M28 (strain MGAS6180).